A 102-amino-acid polypeptide reads, in one-letter code: Glutaredoxin-C14 (102 aa).

The Glutaredoxin domain occupies M1–H101. Residues C21 and C24 are joined by a disulfide bond.

It belongs to the glutaredoxin family. CC-type subfamily.

The protein localises to the cytoplasm. Functionally, has a glutathione-disulfide oxidoreductase activity in the presence of NADPH and glutathione reductase. Reduces low molecular weight disulfides and proteins. This chain is Glutaredoxin-C14 (GRXC14), found in Arabidopsis thaliana (Mouse-ear cress).